The primary structure comprises 165 residues: Phosphopantetheine adenylyltransferase (165 aa).

A substrate-binding site is contributed by threonine 10. ATP-binding positions include 10-11 (TF) and histidine 18. The substrate site is built by lysine 42, leucine 75, and arginine 89. ATP is bound by residues 90–92 (GLR), glutamate 100, and 125–131 (YTYVASS).

Belongs to the bacterial CoaD family. As to quaternary structure, homohexamer. The cofactor is Mg(2+).

The protein localises to the cytoplasm. The enzyme catalyses (R)-4'-phosphopantetheine + ATP + H(+) = 3'-dephospho-CoA + diphosphate. The protein operates within cofactor biosynthesis; coenzyme A biosynthesis; CoA from (R)-pantothenate: step 4/5. In terms of biological role, reversibly transfers an adenylyl group from ATP to 4'-phosphopantetheine, yielding dephospho-CoA (dPCoA) and pyrophosphate. This chain is Phosphopantetheine adenylyltransferase, found in Chlorobium phaeobacteroides (strain BS1).